We begin with the raw amino-acid sequence, 1051 residues long: Protein ALWAYS EARLY 2 (1051 aa).

Composition is skewed to basic residues over residues 1 to 11 and 27 to 36; these read MAPVRKSRSVN and SKKNKLRKKL. The segment at 1–37 is disordered; it reads MAPVRKSRSVNKRFTNETSPRKDAGKSKKNKLRKKLS. Residues 39 to 93 enclose the SANT domain; that stretch reads KLGPQWTRLELERFYDAYRKHGQEWRRVAAAIRNSRSVDMVEALFNMNRAYLSLP. 6 disordered regions span residues 114-158, 170-210, 225-293, 323-375, 397-605, and 948-981; these read EGSG…IGSP, ANGT…RKQF, TDAS…KDTT, AECN…TSGA, SELS…SSRS, and SIEHHHNPSPSNGSEPVANNDLNSQDGSEKNAQM. Over residues 120–130 the composition is skewed to basic and acidic residues; it reads GEGHDASEVPR. Over residues 131-140 the composition is skewed to basic residues; the sequence is KQQKRKRAKP. Residues 279-293 are compositionally biased toward basic and acidic residues; sequence ESSRERKLDSDKDTT. Positions 323-332 are enriched in acidic residues; it reads AECNDSDDNG. Basic and acidic residues-rich tracts occupy residues 350–372 and 403–417; these read AAIEASREKYSPRSPKKRDDKHT and LKEERTEYDMDEKSS. A compositionally biased stretch (polar residues) spans 560–574; the sequence is KQVSDSGPTSLSQKP. Basic and acidic residues predominate over residues 586–597; sequence LQEKAKSSETTH. Polar residues predominate over residues 967–981; sequence NDLNSQDGSEKNAQM.

Interacts with SNL1 (via PAH3). In terms of tissue distribution, expressed ubiquitously in vegetative and reproductive tissues.

The protein resides in the nucleus. This Arabidopsis thaliana (Mouse-ear cress) protein is Protein ALWAYS EARLY 2 (ALY2).